The chain runs to 338 residues: Solute carrier family 35 member G3 (338 aa).

Residues 1 to 24 (MAGSHPYFNQPDSTHPSPPSAPPS) are disordered. The next 9 membrane-spanning stretches (helical) occupy residues 37–57 (TSGL…VGPL), 67–87 (LPSL…ALLL), 105–125 (FFCA…VQVV), 160–180 (CGLL…LWTL), 190–210 (ALGY…LLVY), 221–241 (TVAF…LFVL), 250–270 (LLSW…FTCV), 281–301 (LVCA…YYML), and 305–325 (VAPS…IITA). Positions 49-174 (LPAGFVGPLS…CILGLIIIVG (126 aa)) constitute an EamA 1 domain. In terms of domain architecture, EamA 2 spans 272-325 (YAVTKAHPALVCAVLHSEVVVALILQYYMLHETVAPSDIMGAGVALGSIAIITA).

This sequence belongs to the SLC35G solute transporter family.

Its subcellular location is the membrane. The chain is Solute carrier family 35 member G3 (SLC35G3) from Pan paniscus (Pygmy chimpanzee).